A 447-amino-acid polypeptide reads, in one-letter code: Serine/threonine-protein phosphatase 2A 55 kDa regulatory subunit B alpha isoform (447 aa).

Ala-2 is subject to N-acetylalanine. WD repeat units follow at residues 11-80, 94-174, 175-218, 227-270, 288-325, 347-381, and 414-446; these read QWCF…FQSH, EKIN…IFAN, AHTY…VDIK, EVIT…KLFE, ISDV…TYQV, ECCW…TLEA, and DFNK…QDKV.

This sequence belongs to the phosphatase 2A regulatory subunit B family. In terms of assembly, PP2A consists of a common heterodimeric core enzyme, composed of a 36 kDa catalytic subunit (subunit C) and a 65 kDa constant regulatory subunit (PR65 or subunit A), that associates with a variety of regulatory subunits. Proteins that associate with the core dimer include three families of regulatory subunits B (the R2/B/PR55/B55, R3/B''/PR72/PR130/PR59 and R5/B'/B56 families), the 48 kDa variable regulatory subunit, viral proteins, and cell signaling molecules. Interacts with the PP2A C catalytic subunit PPP2CA. Interacts with the PP2A A subunit PPP2R1A. Found in a complex with at least ARL2, PPP2CB, PPP2R1A, PPP2R2A, PPP2R5E and TBCD. Interacts with MFHAS1; the interaction is direct. Interacts with PABIR1/FAM122A (via its N-terminus); the interaction is direct and inhibits PP2A activity. Interacts with ARPP19; the interaction is direct and inhibits PP2A activity. Interacts with CRTC3. Brain.

Substrate-recognition subunit of protein phosphatase 2A (PP2A) that plays a key role in cell cycle by controlling mitosis entry and exit. Involved in chromosome clustering during late mitosis by mediating dephosphorylation of MKI67. Essential for serine/threonine-protein phosphatase 2A-mediated dephosphorylation of WEE1, preventing its ubiquitin-mediated proteolysis, increasing WEE1 protein levels, and promoting the G2/M checkpoint. This chain is Serine/threonine-protein phosphatase 2A 55 kDa regulatory subunit B alpha isoform (Ppp2r2a), found in Rattus norvegicus (Rat).